The primary structure comprises 248 residues: Adenylate kinase isoenzyme 6 homolog HBR1 (248 aa).

Residues G19, G21, K22, S23, and S24 each coordinate ATP. Positions 49–72 (NISEIAKERDCIESYDAKLDTSIV) are NMPbind. The segment at 124–134 (TRNYNDLKLQE) is LID. ATP is bound at residue R125. Residues 188–248 (DGVSNELNKQ…EMEHTEDIAQ (61 aa)) are disordered. Residues 202–238 (DSSDEGDDNSDSDEYELEEDEQEEEEEREEYDEETNE) are compositionally biased toward acidic residues. A compositionally biased stretch (basic and acidic residues) spans 239-248 (EMEHTEDIAQ).

This sequence belongs to the adenylate kinase family. AK6 subfamily. In terms of assembly, interacts with small ribosomal subunit protein uS11. Not a structural component of 43S pre-ribosomes, but transiently interacts with them by binding to uS11.

Its subcellular location is the cytoplasm. It localises to the nucleus. The enzyme catalyses AMP + ATP = 2 ADP. It catalyses the reaction ATP + H2O = ADP + phosphate + H(+). In terms of biological role, broad-specificity nucleoside monophosphate (NMP) kinase that catalyzes the reversible transfer of the terminal phosphate group between nucleoside triphosphates and monophosphates. Also has ATPase activity. Involved in the late cytoplasmic maturation steps of the 40S ribosomal particles, specifically 18S rRNA maturation. While NMP activity is not required for ribosome maturation, ATPase activity is. Associates transiently with small ribosomal subunit protein uS11. ATP hydrolysis breaks the interaction with uS11. May temporarily remove uS11 from the ribosome to enable a conformational change of the ribosomal RNA that is needed for the final maturation step of the small ribosomal subunit. Its NMP activity may have a role in nuclear energy homeostasis. Induces transcription of mating-type proteins ALPHA1 and ALPHA2 and moderately represses transcription of mating-type protein A1 in response to hemoglobin and growth signals. Involved in the induction of a high affinity fibronectin receptor by sub-inhibitory dosages of caspofungin. The sequence is that of Adenylate kinase isoenzyme 6 homolog HBR1 (HBR1) from Candida albicans (strain SC5314 / ATCC MYA-2876) (Yeast).